We begin with the raw amino-acid sequence, 338 residues long: Ketol-acid reductoisomerase (NADP(+)) (338 aa).

One can recognise a KARI N-terminal Rossmann domain in the interval M1–T181. NADP(+)-binding positions include Y24 to Q27, R47, S52, and D82 to Q85. The active site involves H107. Residue G133 coordinates NADP(+). Positions N182 to I327 constitute a KARI C-terminal knotted domain. 4 residues coordinate Mg(2+): D190, E194, E226, and E230. S251 contacts substrate.

This sequence belongs to the ketol-acid reductoisomerase family. Requires Mg(2+) as cofactor.

It catalyses the reaction (2R)-2,3-dihydroxy-3-methylbutanoate + NADP(+) = (2S)-2-acetolactate + NADPH + H(+). It carries out the reaction (2R,3R)-2,3-dihydroxy-3-methylpentanoate + NADP(+) = (S)-2-ethyl-2-hydroxy-3-oxobutanoate + NADPH + H(+). Its pathway is amino-acid biosynthesis; L-isoleucine biosynthesis; L-isoleucine from 2-oxobutanoate: step 2/4. The protein operates within amino-acid biosynthesis; L-valine biosynthesis; L-valine from pyruvate: step 2/4. Its function is as follows. Involved in the biosynthesis of branched-chain amino acids (BCAA). Catalyzes an alkyl-migration followed by a ketol-acid reduction of (S)-2-acetolactate (S2AL) to yield (R)-2,3-dihydroxy-isovalerate. In the isomerase reaction, S2AL is rearranged via a Mg-dependent methyl migration to produce 3-hydroxy-3-methyl-2-ketobutyrate (HMKB). In the reductase reaction, this 2-ketoacid undergoes a metal-dependent reduction by NADPH to yield (R)-2,3-dihydroxy-isovalerate. This is Ketol-acid reductoisomerase (NADP(+)) from Chromobacterium violaceum (strain ATCC 12472 / DSM 30191 / JCM 1249 / CCUG 213 / NBRC 12614 / NCIMB 9131 / NCTC 9757 / MK).